A 318-amino-acid polypeptide reads, in one-letter code: Bis(5'-nucleosyl)-tetraphosphatase, symmetrical (318 aa).

The disordered stretch occupies residues 269 to 318 (PGREVTGPAPVARAPRRPRERLGRQRSRGNRGNAGNTAVPAKPQVDTPQD). Residues 282-297 (APRRPRERLGRQRSRG) are compositionally biased toward basic residues.

This sequence belongs to the Ap4A hydrolase family.

It catalyses the reaction P(1),P(4)-bis(5'-adenosyl) tetraphosphate + H2O = 2 ADP + 2 H(+). Hydrolyzes diadenosine 5',5'''-P1,P4-tetraphosphate to yield ADP. This Xanthomonas oryzae pv. oryzae (strain KACC10331 / KXO85) protein is Bis(5'-nucleosyl)-tetraphosphatase, symmetrical.